Consider the following 427-residue polypeptide: Serine--tRNA ligase (427 aa).

231-233 (TAE) serves as a coordination point for L-serine. Residue 262–264 (RSE) participates in ATP binding. Residue E285 coordinates L-serine. Position 349 to 352 (349 to 352 (EISS)) interacts with ATP. Residue S385 participates in L-serine binding.

The protein belongs to the class-II aminoacyl-tRNA synthetase family. Type-1 seryl-tRNA synthetase subfamily. As to quaternary structure, homodimer. The tRNA molecule binds across the dimer.

The protein localises to the cytoplasm. It carries out the reaction tRNA(Ser) + L-serine + ATP = L-seryl-tRNA(Ser) + AMP + diphosphate + H(+). It catalyses the reaction tRNA(Sec) + L-serine + ATP = L-seryl-tRNA(Sec) + AMP + diphosphate + H(+). It participates in aminoacyl-tRNA biosynthesis; selenocysteinyl-tRNA(Sec) biosynthesis; L-seryl-tRNA(Sec) from L-serine and tRNA(Sec): step 1/1. Catalyzes the attachment of serine to tRNA(Ser). Is also able to aminoacylate tRNA(Sec) with serine, to form the misacylated tRNA L-seryl-tRNA(Sec), which will be further converted into selenocysteinyl-tRNA(Sec). The polypeptide is Serine--tRNA ligase (Staphylococcus saprophyticus subsp. saprophyticus (strain ATCC 15305 / DSM 20229 / NCIMB 8711 / NCTC 7292 / S-41)).